A 95-amino-acid polypeptide reads, in one-letter code: Co-chaperonin GroES (95 aa).

It belongs to the GroES chaperonin family. Heptamer of 7 subunits arranged in a ring. Interacts with the chaperonin GroEL.

It is found in the cytoplasm. In terms of biological role, together with the chaperonin GroEL, plays an essential role in assisting protein folding. The GroEL-GroES system forms a nano-cage that allows encapsulation of the non-native substrate proteins and provides a physical environment optimized to promote and accelerate protein folding. GroES binds to the apical surface of the GroEL ring, thereby capping the opening of the GroEL channel. This is Co-chaperonin GroES from Lachnoclostridium phytofermentans (strain ATCC 700394 / DSM 18823 / ISDg) (Clostridium phytofermentans).